The chain runs to 259 residues: Caffeoyl-CoA O-methyltransferase (259 aa).

Residue K33 participates in substrate binding. S-adenosyl-L-methionine-binding positions include T75, E97, 99–100 (GV), S105, D123, and A152. D175 serves as a coordination point for substrate. D175 is an a divalent metal cation binding site. D177 provides a ligand contact to S-adenosyl-L-methionine. A divalent metal cation contacts are provided by D201 and N202. Residue N206 participates in substrate binding.

The protein belongs to the class I-like SAM-binding methyltransferase superfamily. Cation-dependent O-methyltransferase family. CCoAMT subfamily. Requires a divalent metal cation as cofactor.

The enzyme catalyses (E)-caffeoyl-CoA + S-adenosyl-L-methionine = (E)-feruloyl-CoA + S-adenosyl-L-homocysteine + H(+). The protein operates within aromatic compound metabolism; phenylpropanoid biosynthesis. Functionally, methylates caffeoyl-CoA to feruloyl-CoA and 5-hydroxyferuloyl-CoA to sinapoyl-CoA. Plays a role in the synthesis of feruloylated polysaccharides. Involved in the reinforcement of the plant cell wall. Also involved in the responding to wounding or pathogen challenge by the increased formation of cell wall-bound ferulic acid polymers. This Pinus taeda (Loblolly pine) protein is Caffeoyl-CoA O-methyltransferase (CCOAOMT).